The following is a 344-amino-acid chain: Adenosine kinase (344 aa).

Aspartate 298 is an active-site residue.

It belongs to the carbohydrate kinase PfkB family. Mg(2+) is required as a cofactor.

The catalysed reaction is adenosine + ATP = AMP + ADP + H(+). The protein operates within purine metabolism; AMP biosynthesis via salvage pathway; AMP from adenosine: step 1/1. This is Adenosine kinase (ADK) from Schizophyllum commune (Split gill fungus).